Reading from the N-terminus, the 303-residue chain is Phosphoribosylaminoimidazole-succinocarboxamide synthase (303 aa).

It belongs to the SAICAR synthetase family.

It catalyses the reaction 5-amino-1-(5-phospho-D-ribosyl)imidazole-4-carboxylate + L-aspartate + ATP = (2S)-2-[5-amino-1-(5-phospho-beta-D-ribosyl)imidazole-4-carboxamido]succinate + ADP + phosphate + 2 H(+). The protein operates within purine metabolism; IMP biosynthesis via de novo pathway; 5-amino-1-(5-phospho-D-ribosyl)imidazole-4-carboxamide from 5-amino-1-(5-phospho-D-ribosyl)imidazole-4-carboxylate: step 1/2. In Pichia angusta (Yeast), this protein is Phosphoribosylaminoimidazole-succinocarboxamide synthase (ADE1).